A 743-amino-acid chain; its full sequence is MMTQANAYFYDGADVALLNGQYTDVFSLLGMHSANEGKALIVRCFLRNALSVDVISIKDGRKVASLDKVNEQGLFAGTLGRRVKPFLYLLRVEYPLCQLDIVDPYQFDSLLNSDDIYLFGEGSAERAYEFLGANWRQTQGVEGVHFCVWAPNAKRVSVVGDFNHWDDTRHVMRQHLANGLWELFLPNVVEGAHYKFDLVYQNGERHTKSDPMATQMECAPHNASIVPPKAHHSWNDTAWMSKRAATAWHKAPMSAYEVHLGSWRRKGEQGEQYLDYQDLIEQLIPYVKEQGFTHIELMPISEFPFDGSWGYQPVGLYAPTHRFGDANGLKAFVDACHQAGIGIILDWVSAHFPKDPHGLVRFDGTCLYEHEDPRKGTHPDWDTLIYNYDRGEVRSFLLSNACYWLREFHFDGLRLDAVSSMLYLDYSREPGQWLPNAYGGRENLEAISFLQILNQRLYQAFPGVCMIAEESTAFAGVTKPTDQQGLGFGFKWNMGWMNDSLSYLGRDPLYRQFHHHQLTFSLMYAYTEQFMLSVSHDEVVHGKGSLLHKIPGDDWQKFATLRAYYGFMWGHPGKKLLFMGCEFGQRNEWNHNQSLDWHLLAYEPHQGVQRWLKDLNHLYQAMPALSVQDYEGAGFSWLDCENSRDSIFTFVRYGLAGDAPLVFVINMTPQLHTGFRIGLPLAGDYREYLNSDSQIYGGSNQGNAGTVVAESLPWQGMAQSALITVPPLGCLVIGPATGLAEAN.

The Nucleophile role is filled by Asp416. The active-site Proton donor is Glu469.

This sequence belongs to the glycosyl hydrolase 13 family. GlgB subfamily. In terms of assembly, monomer.

The enzyme catalyses Transfers a segment of a (1-&gt;4)-alpha-D-glucan chain to a primary hydroxy group in a similar glucan chain.. It participates in glycan biosynthesis; glycogen biosynthesis. In terms of biological role, catalyzes the formation of the alpha-1,6-glucosidic linkages in glycogen by scission of a 1,4-alpha-linked oligosaccharide from growing alpha-1,4-glucan chains and the subsequent attachment of the oligosaccharide to the alpha-1,6 position. This chain is 1,4-alpha-glucan branching enzyme GlgB, found in Shewanella baltica (strain OS185).